A 258-amino-acid polypeptide reads, in one-letter code: Protein U52 (258 aa).

This sequence belongs to the herpesviridae UL79 family.

The sequence is that of Protein U52 (U52) from Human herpesvirus 6A (strain Uganda-1102) (HHV-6 variant A).